We begin with the raw amino-acid sequence, 167 residues long: Telethonin (167 aa).

Ser-39 bears the Phosphoserine mark. Residues 142-167 (PVVPVSKPGPLRRTLSRSMSQEAQRG) are disordered. Residues 157 to 167 (SRSMSQEAQRG) are compositionally biased toward polar residues.

As to quaternary structure, interacts with MYOZ1, MYOZ2 and MYOZ3. Interacts with CSRP3. Interacts directly with the N-terminal Ig-like domains of 2 titin (TTN) molecules. Interacts with ANKRD2; the interaction is direct.

It localises to the cytoplasm. Its subcellular location is the myofibril. The protein resides in the sarcomere. Functionally, muscle assembly regulating factor. Mediates the antiparallel assembly of titin (TTN) molecules at the sarcomeric Z-disk. This chain is Telethonin (Tcap), found in Mus musculus (Mouse).